The sequence spans 342 residues: Antihemorrhagic factor cHLP-B (342 aa).

Residues 1-19 (MNSLVALVLLGQMIGSTLS) form the signal peptide. 2 consecutive Cystatin fetuin-A-type domains span residues 20-129 (HHLQ…AKCH) and 140-253 (RNCP…SDCV). Disulfide bonds link Cys28–Cys333, Cys85–Cys96, Cys110–Cys128, Cys142–Cys145, Cys204–Cys216, and Cys229–Cys252. Residue Asn95 is glycosylated (N-linked (GlcNAc...) asparagine). N-linked (GlcNAc...) asparagine glycosylation is present at Asn203. N-linked (GlcNAc...) asparagine glycosylation is found at Asn281 and Asn292.

Belongs to the fetuin family. As to quaternary structure, homodimer. Expressed by the liver.

Its subcellular location is the secreted. Potent inhibitor of hemorrhagic activity but also proteolytic activities. Inhibition occurs by formation of a non-covalent complex between this protein and the proteinases at their metalloproteinase domains. This chain is Antihemorrhagic factor cHLP-B, found in Gloydius brevicauda (Korean slamosa snake).